Here is a 101-residue protein sequence, read N- to C-terminus: Large ribosomal subunit protein bL21 (101 aa).

It belongs to the bacterial ribosomal protein bL21 family. As to quaternary structure, part of the 50S ribosomal subunit. Contacts protein L20.

Functionally, this protein binds to 23S rRNA in the presence of protein L20. This chain is Large ribosomal subunit protein bL21, found in Sulfurovum sp. (strain NBC37-1).